Here is a 323-residue protein sequence, read N- to C-terminus: tRNA dimethylallyltransferase (323 aa).

12–19 (GPTAAGKT) contributes to the ATP binding site. 14-19 (TAAGKT) serves as a coordination point for substrate. 2 interaction with substrate tRNA regions span residues 37–40 (DSAL) and 161–165 (QRLMR).

The protein belongs to the IPP transferase family. As to quaternary structure, monomer. Mg(2+) is required as a cofactor.

The catalysed reaction is adenosine(37) in tRNA + dimethylallyl diphosphate = N(6)-dimethylallyladenosine(37) in tRNA + diphosphate. Its function is as follows. Catalyzes the transfer of a dimethylallyl group onto the adenine at position 37 in tRNAs that read codons beginning with uridine, leading to the formation of N6-(dimethylallyl)adenosine (i(6)A). This is tRNA dimethylallyltransferase from Pseudomonas aeruginosa (strain UCBPP-PA14).